The primary structure comprises 54 residues: ATP synthase protein 8 (54 aa).

A helical membrane pass occupies residues 8–28 (WWIINFFIIWTAILLTLVILV).

It belongs to the ATPase protein 8 family. As to quaternary structure, F-type ATPases have 2 components, CF(1) - the catalytic core - and CF(0) - the membrane proton channel.

The protein localises to the mitochondrion membrane. Mitochondrial membrane ATP synthase (F(1)F(0) ATP synthase or Complex V) produces ATP from ADP in the presence of a proton gradient across the membrane which is generated by electron transport complexes of the respiratory chain. F-type ATPases consist of two structural domains, F(1) - containing the extramembraneous catalytic core and F(0) - containing the membrane proton channel, linked together by a central stalk and a peripheral stalk. During catalysis, ATP synthesis in the catalytic domain of F(1) is coupled via a rotary mechanism of the central stalk subunits to proton translocation. Part of the complex F(0) domain. Minor subunit located with subunit a in the membrane. The polypeptide is ATP synthase protein 8 (MT-ATP8) (Paracentrotus lividus (Common sea urchin)).